A 136-amino-acid chain; its full sequence is Large ribosomal subunit protein eL27B (136 aa).

This sequence belongs to the eukaryotic ribosomal protein eL27 family. As to quaternary structure, component of the large ribosomal subunit (LSU). Mature yeast ribosomes consist of a small (40S) and a large (60S) subunit. The 40S small subunit contains 1 molecule of ribosomal RNA (18S rRNA) and at least 33 different proteins. The large 60S subunit contains 3 rRNA molecules (25S, 5.8S and 5S rRNA) and at least 46 different proteins.

It is found in the cytoplasm. Component of the ribosome, a large ribonucleoprotein complex responsible for the synthesis of proteins in the cell. The small ribosomal subunit (SSU) binds messenger RNAs (mRNAs) and translates the encoded message by selecting cognate aminoacyl-transfer RNA (tRNA) molecules. The large subunit (LSU) contains the ribosomal catalytic site termed the peptidyl transferase center (PTC), which catalyzes the formation of peptide bonds, thereby polymerizing the amino acids delivered by tRNAs into a polypeptide chain. The nascent polypeptides leave the ribosome through a tunnel in the LSU and interact with protein factors that function in enzymatic processing, targeting, and the membrane insertion of nascent chains at the exit of the ribosomal tunnel. The protein is Large ribosomal subunit protein eL27B (rpl2702) of Schizosaccharomyces pombe (strain 972 / ATCC 24843) (Fission yeast).